The following is a 241-amino-acid chain: Sugar fermentation stimulation protein homolog (241 aa).

This sequence belongs to the SfsA family.

In Hahella chejuensis (strain KCTC 2396), this protein is Sugar fermentation stimulation protein homolog.